We begin with the raw amino-acid sequence, 375 residues long: 2-isopropylmalate synthase (375 aa).

The 124-residue stretch at 1 to 124 folds into the Pyruvate carboxyltransferase domain; sequence GRTSIDNLCR…FTNIKHNELY (124 aa). 3 residues coordinate Mn(2+): His-59, His-61, and Asn-95. The regulatory domain stretch occupies residues 250–375; sequence QLKYFSIHSG…SKIKNIKNKK (126 aa).

Belongs to the alpha-IPM synthase/homocitrate synthase family. LeuA type 1 subfamily. As to quaternary structure, homodimer.

The protein localises to the cytoplasm. The enzyme catalyses 3-methyl-2-oxobutanoate + acetyl-CoA + H2O = (2S)-2-isopropylmalate + CoA + H(+). The protein operates within amino-acid biosynthesis; L-leucine biosynthesis; L-leucine from 3-methyl-2-oxobutanoate: step 1/4. In terms of biological role, catalyzes the condensation of the acetyl group of acetyl-CoA with 3-methyl-2-oxobutanoate (2-ketoisovalerate) to form 3-carboxy-3-hydroxy-4-methylpentanoate (2-isopropylmalate). The polypeptide is 2-isopropylmalate synthase (Buchnera aphidicola subsp. Thelaxes suberi).